Here is a 130-residue protein sequence, read N- to C-terminus: Protein p56 (130 aa).

It belongs to the phi29likevirus protein p56 family. Homodimer. Interacts with host UDG; this interaction inhibits the uracil-DNA glycosylase.

Its function is as follows. Inhibits the host uracil-DNA glycosylase (UDG), an enzyme which removes uracil residues from DNA by the base excision repair. Interacts with host uracil-DNA glycosylase and prevents the latter from binding to DNA. Since the viral DNA polymerase efficiently incorporates dUMP into DNA, the virus needs to prevent the deleterious effect caused by host UDG when it eliminates uracil residues present in the viral genome. This is Protein p56 from Bacillus phage GA-1 (Bacteriophage GA-1).